The primary structure comprises 367 residues: 3-ketodihydrosphingosine reductase ksrA (367 aa).

A helical membrane pass occupies residues 12 to 32 (ASPATLGISLILCGFIVYSVS). Gly53, Ser55, Gly57, Arg78, Lys82, Asp108, and Leu109 together coordinate NADPH. Positions 53–57 (GGSDG) match the GXSXG motif. The helical transmembrane segment at 193 to 213 (LIFTCSTLAFVSIAGYAPYSP) threads the bilayer. The active-site Proton acceptor is the Tyr211. Positions 211, 215, and 259 each coordinate NADP(+). Lys215 acts as the Lowers pKa of active site Tyr in catalysis.

It belongs to the short-chain dehydrogenases/reductases (SDR) family.

It is found in the endoplasmic reticulum membrane. It carries out the reaction sphinganine + NADP(+) = 3-oxosphinganine + NADPH + H(+). It functions in the pathway lipid metabolism; sphingolipid metabolism. Its function is as follows. Catalyzes the reduction of 3'-oxosphinganine (3-ketodihydrosphingosine/KDS) to sphinganine (dihydrosphingosine/DHS), the second step of de novo sphingolipid biosynthesis. This Aspergillus fumigatus (strain ATCC MYA-4609 / CBS 101355 / FGSC A1100 / Af293) (Neosartorya fumigata) protein is 3-ketodihydrosphingosine reductase ksrA.